We begin with the raw amino-acid sequence, 103 residues long: UPF0235 protein Rleg2_3707 (103 aa).

This sequence belongs to the UPF0235 family.

This chain is UPF0235 protein Rleg2_3707, found in Rhizobium leguminosarum bv. trifolii (strain WSM2304).